A 548-amino-acid chain; its full sequence is Chaperonin GroEL (548 aa).

ATP contacts are provided by residues Thr29 to Pro32, Asp86 to Thr90, Gly413, Asn476 to Leu478, and Asp492. Residues Pro522–Asp531 show a composition bias toward acidic residues. The disordered stretch occupies residues Pro522–Met548. Over residues Met532 to Met548 the composition is skewed to gly residues.

It belongs to the chaperonin (HSP60) family. As to quaternary structure, forms a cylinder of 14 subunits composed of two heptameric rings stacked back-to-back. Interacts with the co-chaperonin GroES.

The protein resides in the cytoplasm. It carries out the reaction ATP + H2O + a folded polypeptide = ADP + phosphate + an unfolded polypeptide.. In terms of biological role, together with its co-chaperonin GroES, plays an essential role in assisting protein folding. The GroEL-GroES system forms a nano-cage that allows encapsulation of the non-native substrate proteins and provides a physical environment optimized to promote and accelerate protein folding. The chain is Chaperonin GroEL from Natranaerobius thermophilus (strain ATCC BAA-1301 / DSM 18059 / JW/NM-WN-LF).